Here is a 622-residue protein sequence, read N- to C-terminus: Dehydrogenase xptC (622 aa).

Positions 1–18 are cleaved as a signal peptide; sequence MAKLSVILLFRSLLLCGA. FAD-binding positions include 47 to 48, 68 to 69, and 123 to 126; these read VS, EA, and NAMI. 5 N-linked (GlcNAc...) asparagine glycosylation sites follow: Asn-160, Asn-173, Asn-357, Asn-364, and Asn-480. Residue 598–599 participates in FAD binding; sequence PM.

The protein belongs to the GMC oxidoreductase family. Homodimer. The cofactor is FAD.

It functions in the pathway secondary metabolite biosynthesis. Its function is as follows. Dehydrogenase involved in the conversion of monodictyphenone to the prenyl xanthones such as emericellin, shamixanthone and epishamixanthone. Monodictyphenone is first converted to variecoxanthone A via a paeciloxanthone intermediate by the consecutive actions of the FAD-dependent monooxygenase mdpD and the xanthone prenyltransferase xptB. XptB catalyzes regular O-prenylation at the hydroxy group of C-7 of the xanthone ring. Variecoxanthone A is further prenylated to emericellin by xptA before being reduced to shamixanthone and epishamixanthone by the dehydrogenase xptC. This is Dehydrogenase xptC from Emericella nidulans (strain FGSC A4 / ATCC 38163 / CBS 112.46 / NRRL 194 / M139) (Aspergillus nidulans).